The chain runs to 348 residues: WRKY transcription factor WRKY71 (348 aa).

Residues 50-84 are a coiled coil; that stretch reads VAALEAELKRMGAENRQLSEMLAAVAAKYEALQSQ. Disordered stretches follow at residues 91–141 and 246–287; these read ASAN…APHH and GEHN…APVV. Residues 102–114 show a composition bias toward low complexity; that stretch reads NQSSTSEGGSVSP. Residues 116–122 carry the Nuclear localization signal motif; that stretch reads RKRKSES. The span at 126–136 shows a compositional bias: pro residues; sequence SPPPPPPPHPH. Residues 187-253 constitute a DNA-binding region (WRKY); it reads DLSLVVKDGY…YEGEHNHGQP (67 aa). The segment at 267-348 is transcription repression of gibberellic acid (GA)-induced promoters; the sequence is SGKSAGKPPH…RILELSPTKD (82 aa). Over residues 275–286 the composition is skewed to pro residues; that stretch reads PHAPAAAPPAPV.

Belongs to the WRKY group II-a family. Interacts with WRKY51; this interaction promotes W box binding of the complex WRKY51/WRKY71 in a zinc ion-dependent manner. Highly expressed in aleurone cells. In seeds, predominantly present in the plumule, radicle and scutellum of the embryo. Expressed in roots, stems, young leaves and spikelets.

The protein resides in the nucleus. Its function is as follows. Transcription repressor. Interacts specifically with the W box (5'-(T)TGAC[CT]-3'), a frequently occurring elicitor-responsive cis-acting element. Represses specifically gibberellic acid (GA)-induced promoters in aleurone cells, probably by interfering with GAM1. Regulates, probably indirectly, the activation of defense-related genes such as GF14E during defense response. Modulates plant innate immunity against X.oryzae pv. oryzae (Xoo). Confers resistance to the virulent bacterial pathogen X.oryzae pv. oryzae (Xoo) 13751, probably via the regulation of NPR1 and PR1b defense signaling pathways. The sequence is that of WRKY transcription factor WRKY71 from Oryza sativa subsp. indica (Rice).